We begin with the raw amino-acid sequence, 185 residues long: MSRKVVQPPSLRIIPPLNFCPVEKQLYRSGQPSIINQSFLQDLNLKTIIWLASEEPQEEFLDYCSMNSINIEFVGMINDDYSYQNVNPWDSLNETTIKKALELICDRNNYPMLVCCGMGRHRTGTVIGCLRRLQGWNLASVSEEYRRFTGARGGRILVELLIEGFDISTVEIGSGKGSSMARKKR.

A Tyrosine-protein phosphatase domain is found at 18 to 178 (NFCPVEKQLY…TVEIGSGKGS (161 aa)). C116 functions as the Phosphocysteine intermediate in the catalytic mechanism.

The protein belongs to the protein-tyrosine phosphatase family.

It is found in the cytoplasm. It carries out the reaction O-phospho-L-tyrosyl-[protein] + H2O = L-tyrosyl-[protein] + phosphate. Functionally, putative tyrosine-protein phosphatase required for protection against superoxide stress. This chain is Putative tyrosine-protein phosphatase OCA1 (OCA1), found in Meyerozyma guilliermondii (strain ATCC 6260 / CBS 566 / DSM 6381 / JCM 1539 / NBRC 10279 / NRRL Y-324) (Yeast).